A 203-amino-acid chain; its full sequence is Ribosomal RNA large subunit methyltransferase E (203 aa).

Positions 59, 61, 79, 95, and 118 each coordinate S-adenosyl-L-methionine. The active-site Proton acceptor is the K158.

The protein belongs to the class I-like SAM-binding methyltransferase superfamily. RNA methyltransferase RlmE family.

The protein localises to the cytoplasm. The catalysed reaction is uridine(2552) in 23S rRNA + S-adenosyl-L-methionine = 2'-O-methyluridine(2552) in 23S rRNA + S-adenosyl-L-homocysteine + H(+). Functionally, specifically methylates the uridine in position 2552 of 23S rRNA at the 2'-O position of the ribose in the fully assembled 50S ribosomal subunit. This Wigglesworthia glossinidia brevipalpis protein is Ribosomal RNA large subunit methyltransferase E.